The chain runs to 457 residues: MTQLSVVILAAGKGTRMYSDLPKVLHTVAGKPMVQHVIDTAKQIDAKQIHLIYGHGGELLQQRLSSEPVNWVLQAEQLGTGHAMQQAAPFFADDENILMLYGDAPLITKETLERLIAAKPANGIALLTVELENPTGYGRIIRENGSVVAIVEQKDANAEQLKIREVNTGVMVASGASFKKWLANLNNNNAQGEYYITDVIAMANQDGYKVQAVQASEFMEVEGANNRLQLAALERFYQKTQAEKLLLAGVRLIDPARFDIRGSLTHGKDVEIDVNVIIEGEVKLGNRVRIGAGCVLKNCEIGDDVEIKPYSVIEDAVVGKAAQIGPFSRLRPGANLAEETHVGNFVEIKNAQVGKGSKVNHLTYVGDAEVGSNCNIGAGVITCNYDGANKFKTIIGNNVFVGSDSQLVAPVTIADGATIGAGATVTKDVAENELVISRVPQRHIQGWQRPTKKKIAD.

Residues M1–R227 are pyrophosphorylase. UDP-N-acetyl-alpha-D-glucosamine-binding positions include L9 to G12, K23, Q74, G79 to T80, Y101 to D103, G138, E152, N167, and N225. D103 contacts Mg(2+). N225 is a Mg(2+) binding site. The tract at residues L228 to A248 is linker. An N-acetyltransferase region spans residues G249 to D457. Residues R331 and K349 each coordinate UDP-N-acetyl-alpha-D-glucosamine. H361 serves as the catalytic Proton acceptor. Residues Y364 and N375 each contribute to the UDP-N-acetyl-alpha-D-glucosamine site. Residues A378, N384–Y385, S403, A421, and R438 each bind acetyl-CoA.

The protein in the N-terminal section; belongs to the N-acetylglucosamine-1-phosphate uridyltransferase family. It in the C-terminal section; belongs to the transferase hexapeptide repeat family. As to quaternary structure, homotrimer. Requires Mg(2+) as cofactor.

It is found in the cytoplasm. It catalyses the reaction alpha-D-glucosamine 1-phosphate + acetyl-CoA = N-acetyl-alpha-D-glucosamine 1-phosphate + CoA + H(+). The catalysed reaction is N-acetyl-alpha-D-glucosamine 1-phosphate + UTP + H(+) = UDP-N-acetyl-alpha-D-glucosamine + diphosphate. The protein operates within nucleotide-sugar biosynthesis; UDP-N-acetyl-alpha-D-glucosamine biosynthesis; N-acetyl-alpha-D-glucosamine 1-phosphate from alpha-D-glucosamine 6-phosphate (route II): step 2/2. It participates in nucleotide-sugar biosynthesis; UDP-N-acetyl-alpha-D-glucosamine biosynthesis; UDP-N-acetyl-alpha-D-glucosamine from N-acetyl-alpha-D-glucosamine 1-phosphate: step 1/1. It functions in the pathway bacterial outer membrane biogenesis; LPS lipid A biosynthesis. Its function is as follows. Catalyzes the last two sequential reactions in the de novo biosynthetic pathway for UDP-N-acetylglucosamine (UDP-GlcNAc). The C-terminal domain catalyzes the transfer of acetyl group from acetyl coenzyme A to glucosamine-1-phosphate (GlcN-1-P) to produce N-acetylglucosamine-1-phosphate (GlcNAc-1-P), which is converted into UDP-GlcNAc by the transfer of uridine 5-monophosphate (from uridine 5-triphosphate), a reaction catalyzed by the N-terminal domain. This Actinobacillus pleuropneumoniae serotype 5b (strain L20) protein is Bifunctional protein GlmU.